We begin with the raw amino-acid sequence, 454 residues long: CCA-adding enzyme (454 aa).

Positions 53 and 56 each coordinate ATP. Residues S53 and K56 each coordinate CTP. 3 residues coordinate Mg(2+): D65, D67, and D119. 3 residues coordinate ATP: H142, K161, and Y170. Residues H142, K161, and Y170 each coordinate CTP.

The protein belongs to the tRNA nucleotidyltransferase/poly(A) polymerase family. Archaeal CCA-adding enzyme subfamily. Homodimer. Mg(2+) serves as cofactor.

The catalysed reaction is a tRNA precursor + 2 CTP + ATP = a tRNA with a 3' CCA end + 3 diphosphate. The enzyme catalyses a tRNA with a 3' CCA end + 2 CTP + ATP = a tRNA with a 3' CCACCA end + 3 diphosphate. Functionally, catalyzes the addition and repair of the essential 3'-terminal CCA sequence in tRNAs without using a nucleic acid template. Adds these three nucleotides in the order of C, C, and A to the tRNA nucleotide-73, using CTP and ATP as substrates and producing inorganic pyrophosphate. tRNA 3'-terminal CCA addition is required both for tRNA processing and repair. Also involved in tRNA surveillance by mediating tandem CCA addition to generate a CCACCA at the 3' terminus of unstable tRNAs. While stable tRNAs receive only 3'-terminal CCA, unstable tRNAs are marked with CCACCA and rapidly degraded. In Thermococcus gammatolerans (strain DSM 15229 / JCM 11827 / EJ3), this protein is CCA-adding enzyme.